The primary structure comprises 652 residues: Acetyl-coenzyme A synthetase (652 aa).

Residues 191-194 (RAGR), Thr311, and Asn335 contribute to the CoA site. ATP is bound by residues 387 to 389 (GEP), 411 to 416 (DTWWQT), Asp500, and Arg515. Ser523 is a binding site for CoA. Arg526 lines the ATP pocket. 3 residues coordinate Mg(2+): Val537, His539, and Ile542. Residue Arg584 participates in CoA binding. Lys609 is subject to N6-acetyllysine.

It belongs to the ATP-dependent AMP-binding enzyme family. It depends on Mg(2+) as a cofactor. Post-translationally, acetylated. Deacetylation by the SIR2-homolog deacetylase activates the enzyme.

The catalysed reaction is acetate + ATP + CoA = acetyl-CoA + AMP + diphosphate. Functionally, catalyzes the conversion of acetate into acetyl-CoA (AcCoA), an essential intermediate at the junction of anabolic and catabolic pathways. Acs undergoes a two-step reaction. In the first half reaction, Acs combines acetate with ATP to form acetyl-adenylate (AcAMP) intermediate. In the second half reaction, it can then transfer the acetyl group from AcAMP to the sulfhydryl group of CoA, forming the product AcCoA. In terms of biological role, enables the cell to use acetate during aerobic growth to generate energy via the TCA cycle, and biosynthetic compounds via the glyoxylate shunt. Acetylates CheY, the response regulator involved in flagellar movement and chemotaxis. The polypeptide is Acetyl-coenzyme A synthetase (Serratia proteamaculans (strain 568)).